A 246-amino-acid chain; its full sequence is Auxin-responsive protein IAA25 (246 aa).

The tract at residues Met-1–Glu-22 is disordered. The span at Leu-10 to Glu-22 shows a compositional bias: basic and acidic residues. Residues Leu-28–Leu-32 carry the EAR-like (transcriptional repression) motif. In terms of domain architecture, PB1 spans Thr-143–Asp-238.

This sequence belongs to the Aux/IAA family. As to quaternary structure, homodimers and heterodimers. Highly expressed in flowers. Expressed in roots and seedlings.

Its subcellular location is the nucleus. Its function is as follows. Aux/IAA proteins are short-lived transcriptional factors that function as repressors of early auxin response genes at low auxin concentrations. This is Auxin-responsive protein IAA25 (IAA25) from Oryza sativa subsp. japonica (Rice).